Here is a 311-residue protein sequence, read N- to C-terminus: Methionyl-tRNA formyltransferase (311 aa).

A (6S)-5,6,7,8-tetrahydrofolate-binding site is contributed by 112 to 115; sequence SLLP.

The protein belongs to the Fmt family.

The enzyme catalyses L-methionyl-tRNA(fMet) + (6R)-10-formyltetrahydrofolate = N-formyl-L-methionyl-tRNA(fMet) + (6S)-5,6,7,8-tetrahydrofolate + H(+). Attaches a formyl group to the free amino group of methionyl-tRNA(fMet). The formyl group appears to play a dual role in the initiator identity of N-formylmethionyl-tRNA by promoting its recognition by IF2 and preventing the misappropriation of this tRNA by the elongation apparatus. In Bradyrhizobium sp. (strain BTAi1 / ATCC BAA-1182), this protein is Methionyl-tRNA formyltransferase.